Consider the following 813-residue polypeptide: Ankyrin repeat domain-containing protein SOWAHB (813 aa).

Disordered regions lie at residues 142 to 256 and 400 to 436; these read SAAP…QSLS and ETCGSEESDSGEGGDCDTEPRDNDDADDDTFSSDSHK. Over residues 158–176 the composition is skewed to basic and acidic residues; the sequence is MSEKARVNPSHWDTKRYYP. Residues 177–189 show a composition bias toward pro residues; sequence EDPPVPDSLPVSP. Positions 191 to 202 are enriched in polar residues; it reads CTNTRQSSFTST. Residues 208–244 are compositionally biased toward low complexity; that stretch reads HSLSSNNLSSSFSSPESPGLVAKPYNASPSPAGSSPN. Positions 245–256 are enriched in polar residues; sequence IREQTPKSQSLS. Positions 400–416 are enriched in acidic residues; sequence ETCGSEESDSGEGGDCD. ANK repeat units follow at residues 657 to 686 and 696 to 726; these read TGYTALHWFAKHGCIDLFNKVVIGAKKAGI and NGYTPLHIAAIHGHHKVAIMLVEKLKVNVKV.

Belongs to the SOWAH family.

In Xenopus laevis (African clawed frog), this protein is Ankyrin repeat domain-containing protein SOWAHB (sowahb).